Reading from the N-terminus, the 268-residue chain is 4-hydroxy-tetrahydrodipicolinate reductase (268 aa).

Residues 7–12 and Glu33 each bind NAD(+); that span reads GAGGRM. NADP(+) is bound at residue Arg34. Residues 97 to 99 and 121 to 124 each bind NAD(+); these read GTT and SGNM. His155 serves as the catalytic Proton donor/acceptor. His156 provides a ligand contact to (S)-2,3,4,5-tetrahydrodipicolinate. Lys159 acts as the Proton donor in catalysis. Residue 165–166 coordinates (S)-2,3,4,5-tetrahydrodipicolinate; sequence GT.

Belongs to the DapB family.

The protein resides in the cytoplasm. The catalysed reaction is (S)-2,3,4,5-tetrahydrodipicolinate + NAD(+) + H2O = (2S,4S)-4-hydroxy-2,3,4,5-tetrahydrodipicolinate + NADH + H(+). It catalyses the reaction (S)-2,3,4,5-tetrahydrodipicolinate + NADP(+) + H2O = (2S,4S)-4-hydroxy-2,3,4,5-tetrahydrodipicolinate + NADPH + H(+). It participates in amino-acid biosynthesis; L-lysine biosynthesis via DAP pathway; (S)-tetrahydrodipicolinate from L-aspartate: step 4/4. Functionally, catalyzes the conversion of 4-hydroxy-tetrahydrodipicolinate (HTPA) to tetrahydrodipicolinate. This Brucella melitensis biotype 1 (strain ATCC 23456 / CCUG 17765 / NCTC 10094 / 16M) protein is 4-hydroxy-tetrahydrodipicolinate reductase.